Reading from the N-terminus, the 396-residue chain is Smad nuclear-interacting protein 1 (396 aa).

Residues M1 to R10 are compositionally biased toward basic and acidic residues. The interval M1–E227 is disordered. K30 is covalently cross-linked (Glycyl lysine isopeptide (Lys-Gly) (interchain with G-Cter in SUMO); alternate). A Glycyl lysine isopeptide (Lys-Gly) (interchain with G-Cter in SUMO1); alternate cross-link involves residue K30. Residue K30 forms a Glycyl lysine isopeptide (Lys-Gly) (interchain with G-Cter in SUMO2); alternate linkage. 4 positions are modified to phosphoserine: S35, S49, S52, and S54. Phosphothreonine is present on T57. Phosphoserine occurs at positions 58 and 99. The segment covering P77 to V105 has biased composition (basic residues). Over residues V107–R142 the composition is skewed to basic and acidic residues. Residue K108 forms a Glycyl lysine isopeptide (Lys-Gly) (interchain with G-Cter in SUMO2) linkage. S153 carries the phosphoserine modification. The stretch at R165–G196 forms a coiled coil. Phosphoserine is present on S202. The segment covering N213 to S225 has biased composition (basic and acidic residues). Residue K223 forms a Glycyl lysine isopeptide (Lys-Gly) (interchain with G-Cter in SUMO2) linkage. In terms of domain architecture, FHA spans Y281–I344. The span at S373–K382 shows a compositional bias: basic and acidic residues. The segment at S373–S396 is disordered. The segment covering D383–S396 has biased composition (acidic residues). S394 carries the phosphoserine modification.

In terms of assembly, component of activated spliceosome complexes. Component of the minor spliceosome, which splices U12-type introns. Binds SMAD4 and CREBBP/EP300. Binds the SMAD1/OAZ1/PSMB4 complex. Interacts with DROSHA and SMARCA4. Component of the SNARP complex which consists at least of SNIP1, SNW1, THRAP3, BCLAF1 and PNN. In terms of processing, degraded by the proteasome upon binding to the SMAD1/OAZ1/PSMB4 complex. In terms of tissue distribution, ubiquitous, with highest expression in heart and skeletal muscle.

The protein resides in the nucleus. Its function is as follows. Required for pre-mRNA splicing as component of the spliceosome. As a component of the minor spliceosome, involved in the splicing of U12-type introns in pre-mRNAs. Down-regulates NF-kappa-B signaling by competing with RELA for CREBBP/EP300 binding. Involved in the microRNA (miRNA) biogenesis. May be involved in cyclin-D1/CCND1 mRNA stability through the SNARP complex which associates with both the 3'end of the CCND1 gene and its mRNA. The sequence is that of Smad nuclear-interacting protein 1 (SNIP1) from Homo sapiens (Human).